The sequence spans 158 residues: uncharacterized protein (158 aa).

2 helical membrane passes run 66-86 (LLIIVAVLFPPLYISGLPWIM) and 94-114 (FFSLSITSFIMVPFLLISLTI).

The protein localises to the membrane. This is an uncharacterized protein from Saccharomyces cerevisiae (strain ATCC 204508 / S288c) (Baker's yeast).